Consider the following 132-residue polypeptide: Small ribosomal subunit protein bS6 (132 aa).

The interval 94-132 (DAVTEESQLAKNADEKRARKATTRRPDRDDSDDNDHSED) is disordered. Over residues 122-132 (DDSDDNDHSED) the composition is skewed to acidic residues.

It belongs to the bacterial ribosomal protein bS6 family.

Its function is as follows. Binds together with bS18 to 16S ribosomal RNA. This chain is Small ribosomal subunit protein bS6, found in Psychrobacter arcticus (strain DSM 17307 / VKM B-2377 / 273-4).